A 117-amino-acid polypeptide reads, in one-letter code: Large ribosomal subunit protein bL19 (117 aa).

It belongs to the bacterial ribosomal protein bL19 family.

Its function is as follows. This protein is located at the 30S-50S ribosomal subunit interface and may play a role in the structure and function of the aminoacyl-tRNA binding site. The polypeptide is Large ribosomal subunit protein bL19 (Phocaeicola vulgatus (strain ATCC 8482 / DSM 1447 / JCM 5826 / CCUG 4940 / NBRC 14291 / NCTC 11154) (Bacteroides vulgatus)).